Reading from the N-terminus, the 257-residue chain is Thiazole synthase (257 aa).

Lys-96 acts as the Schiff-base intermediate with DXP in catalysis. 1-deoxy-D-xylulose 5-phosphate is bound by residues Gly-157, 184–185 (AG), and 206–207 (NT).

The protein belongs to the ThiG family. As to quaternary structure, homotetramer. Forms heterodimers with either ThiH or ThiS.

The protein localises to the cytoplasm. It carries out the reaction [ThiS sulfur-carrier protein]-C-terminal-Gly-aminoethanethioate + 2-iminoacetate + 1-deoxy-D-xylulose 5-phosphate = [ThiS sulfur-carrier protein]-C-terminal Gly-Gly + 2-[(2R,5Z)-2-carboxy-4-methylthiazol-5(2H)-ylidene]ethyl phosphate + 2 H2O + H(+). It participates in cofactor biosynthesis; thiamine diphosphate biosynthesis. Catalyzes the rearrangement of 1-deoxy-D-xylulose 5-phosphate (DXP) to produce the thiazole phosphate moiety of thiamine. Sulfur is provided by the thiocarboxylate moiety of the carrier protein ThiS. In vitro, sulfur can be provided by H(2)S. This Bartonella quintana (strain Toulouse) (Rochalimaea quintana) protein is Thiazole synthase.